We begin with the raw amino-acid sequence, 752 residues long: Complement C2 (752 aa).

The signal sequence occupies residues 1-20; sequence MGPLMVLFCLLFVYTGLADS. 3 Sushi domains span residues 22-86, 87-146, and 149-206; these read PSCP…VCKP, VRCP…VCDN, and GHCP…ICRQ. 6 cysteine pairs are disulfide-bonded: C24-C64, C51-C84, C89-C131, C117-C144, C151-C191, and C177-C204. A glycan (N-linked (GlcNAc...) asparagine) is linked at N29. An N-linked (GlcNAc...) asparagine glycan is attached at N112. The VWFA domain occupies 254-452; that stretch reads NLYLLLDCSQ…KALHQVFEHM (199 aa). Positions 260 to 264 match the MIDAS-like motif motif; that stretch reads DCSQS. Positions 262 and 264 each coordinate Mg(2+). 2 N-linked (GlcNAc...) asparagine glycosylation sites follow: N290 and N333. Position 337 (T337) interacts with Mg(2+). Disulfide bonds link C463/C581, C492/C508, and C584/C600. The Peptidase S1 domain maps to 464-744; sequence GVGNMSANAS…MQPWLRQHLG (281 aa). Residues N467 and N471 are each glycosylated (N-linked (GlcNAc...) asparagine). Residues H507 and D561 each act as charge relay system in the active site. Residues N621 and N651 are each glycosylated (N-linked (GlcNAc...) asparagine). 2 disulfides stabilise this stretch: C638–C665 and C675–C705. Residue S679 is the Charge relay system of the active site.

The protein belongs to the peptidase S1 family. As to quaternary structure, serine protease component of the C3 convertase, also named C4bC2b, composed of the serine protease complement C2b and complement C4b. Serine protease component of the C5 convertase, also named C4bC2bC3b, composed of the serine protease complement C2b, complement C3b, as well as complement C4b. The cofactor is Mg(2+). Mn(2+) serves as cofactor. Cleaved and activated by different proteases depending on the complement pathway to generate complement C2a and serine protease complement C2b chains. Cleaved and activated by C1S following activation by the classical complement system. Cleaved and activated by MASP2 following activation by the lectin complement system. Cleaved and activated by GZMK following activation by the GZMK complement system.

The protein localises to the secreted. It localises to the cell surface. The catalysed reaction is Selective cleavage of Arg-|-Ser bond in complement component C3 alpha-chain to form C3a and C3b, and Arg-|-Xaa bond in complement component C5 alpha-chain to form C5a and C5b.. In terms of biological role, precursor of the catalytic component of the C3 and C5 convertase complexes, which are part of the complement pathway, a cascade of proteins that leads to phagocytosis and breakdown of pathogens and signaling that strengthens the adaptive immune system. Component C2 is part of the classical, lectin and GZMK complement systems. Catalytic component of the complement C3 and C5 convertase complexes. Following complement activation, recruited to the surface of pathogens by complement C4b opsonin to form the C3 convertase, or C3b and C4b opsonins to form the C5 convertase. As part of the C3 convertase, cleaves and activate C3 into C3a anaphylatoxin and C3b opsonin, the next components of the complement pathways. As part of the C5 convertase, cleaves and activate C5 into C5a anaphylatoxin and C5b component of the membrane attack complex. The sequence is that of Complement C2 from Gorilla gorilla gorilla (Western lowland gorilla).